We begin with the raw amino-acid sequence, 511 residues long: Cobyric acid synthase (511 aa).

Positions 251–443 (LLDIAIICLP…IHGIFDNDVF (193 aa)) constitute a GATase cobBQ-type domain. Catalysis depends on cysteine 332, which acts as the Nucleophile. The active site involves histidine 435.

The protein belongs to the CobB/CobQ family. CobQ subfamily.

Its pathway is cofactor biosynthesis; adenosylcobalamin biosynthesis. In terms of biological role, catalyzes amidations at positions B, D, E, and G on adenosylcobyrinic A,C-diamide. NH(2) groups are provided by glutamine, and one molecule of ATP is hydrogenolyzed for each amidation. The sequence is that of Cobyric acid synthase from Listeria monocytogenes serotype 4b (strain CLIP80459).